Reading from the N-terminus, the 47-residue chain is uncharacterized protein (47 aa).

The interval V22–G47 is disordered.

This is an uncharacterized protein from Saccharomyces cerevisiae (strain ATCC 204508 / S288c) (Baker's yeast).